The primary structure comprises 730 residues: Polyribonucleotide nucleotidyltransferase (730 aa).

2 residues coordinate Mg(2+): D489 and D495. In terms of domain architecture, KH spans 556-615 (PRIEVMKIAVDKIREVIGSGGKVIREIVEKTGAKINIEDDGTIKIASASGDAIKAAINWI). Positions 625-693 (GQIYEGTVVK…ERGKTRLSMK (69 aa)) constitute an S1 motif domain. Residues 700–730 (GEDLEAKAKAERDAARAAAPAATGDEAGAAE) are disordered. The segment covering 703–714 (LEAKAKAERDAA) has biased composition (basic and acidic residues). The segment covering 715–730 (RAAAPAATGDEAGAAE) has biased composition (low complexity).

This sequence belongs to the polyribonucleotide nucleotidyltransferase family. Mg(2+) serves as cofactor.

The protein localises to the cytoplasm. It catalyses the reaction RNA(n+1) + phosphate = RNA(n) + a ribonucleoside 5'-diphosphate. Its function is as follows. Involved in mRNA degradation. Catalyzes the phosphorolysis of single-stranded polyribonucleotides processively in the 3'- to 5'-direction. The protein is Polyribonucleotide nucleotidyltransferase of Xanthobacter autotrophicus (strain ATCC BAA-1158 / Py2).